We begin with the raw amino-acid sequence, 660 residues long: Junctophilin-1 (660 aa).

Residues 1–638 (MTGGRFDFDD…EKEANSGPNS (638 aa)) are Cytoplasmic-facing. 5 MORN repeats span residues 14–36 (YCGGWEEGKAHGHGICTGPKGQG), 38–59 (YSGSWSHGFEVVGVYTWPSGNT), 60–82 (YQGYWAQGKRHGLGVETKGKWMY), 106–128 (YEGTWSNGLQDGYGVETYGDGGT), and 129–151 (YQGQWAGGMRHGYGVRQSVPYGM). 3 positions are modified to phosphoserine: Ser-157, Ser-216, and Ser-220. Residues 228–247 (SKSSISSKRSSVRSDAAMSR) form a disordered region. 2 MORN repeats span residues 281–303 (YMGEWKNDKRNGFGISERSNGMK) and 304–326 (YEGEWANNKRHGYGCTVFPDGSK). Positions 437 to 454 (NPEEKVLEKPPSPKESPH) are enriched in basic and acidic residues. Residues 437-631 (NPEEKVLEKP…NDTCPSLEKE (195 aa)) are disordered. Ser-452 carries the phosphoserine modification. Residue Thr-461 is modified to Phosphothreonine. 3 positions are modified to phosphoserine: Ser-465, Ser-469, and Ser-475. Positions 466–477 (PESSPKQSHSPQ) are enriched in low complexity. 2 stretches are compositionally biased toward basic and acidic residues: residues 562 to 571 (PPEDREDDRG) and 598 to 612 (VAKESKTEPKAKKSE). The helical; Anchor for type IV membrane protein transmembrane segment at 639–659 (IMIVLVMLLNIGLAILFVHFL) threads the bilayer.

It belongs to the junctophilin family. In terms of tissue distribution, specifically expressed in skeletal muscle. Weakly expressed in embryos and neonates. Abundant in young adult muscles.

The protein resides in the cell membrane. Its subcellular location is the endoplasmic reticulum membrane. The protein localises to the sarcoplasmic reticulum membrane. In terms of biological role, junctophilins contribute to the formation of junctional membrane complexes (JMCs) which link the plasma membrane with the endoplasmic or sarcoplasmic reticulum in excitable cells. Provides a structural foundation for functional cross-talk between the cell surface and intracellular calcium release channels. JPH1 contributes to the construction of the skeletal muscle triad by linking the t-tubule (transverse-tubule) and SR (sarcoplasmic reticulum) membranes. This is Junctophilin-1 (Jph1) from Mus musculus (Mouse).